We begin with the raw amino-acid sequence, 155 residues long: Transcriptional repressor NrdR (155 aa).

The segment at 3–34 (CPFCGNIDTQVKDSRPAEDHVSIRRRRFCPAC) is a zinc-finger region. The ATP-cone domain maps to 49 to 139 (LVVIKSTGKR…VYKNFQAADD (91 aa)).

Belongs to the NrdR family. It depends on Zn(2+) as a cofactor.

Its function is as follows. Negatively regulates transcription of bacterial ribonucleotide reductase nrd genes and operons by binding to NrdR-boxes. The polypeptide is Transcriptional repressor NrdR (Roseobacter denitrificans (strain ATCC 33942 / OCh 114) (Erythrobacter sp. (strain OCh 114))).